The chain runs to 384 residues: Chaperone protein DnaJ (384 aa).

In terms of domain architecture, J spans 5 to 70; that stretch reads DFYQVLGVSK…QKRQMYDQYG (66 aa). The CR-type zinc-finger motif lies at 138–216; sequence GKTVELEIPT…CHGHGRKEET (79 aa). Residues Cys151, Cys154, Cys168, Cys171, Cys190, Cys193, Cys204, and Cys207 each coordinate Zn(2+). CXXCXGXG motif repeat units follow at residues 151-158, 168-175, 190-197, and 204-211; these read CRDCNGSG, CGHCHGSG, CPQCRGTG, and CRTCHGHG.

Belongs to the DnaJ family. As to quaternary structure, homodimer. The cofactor is Zn(2+).

It is found in the cytoplasm. In terms of biological role, participates actively in the response to hyperosmotic and heat shock by preventing the aggregation of stress-denatured proteins and by disaggregating proteins, also in an autonomous, DnaK-independent fashion. Unfolded proteins bind initially to DnaJ; upon interaction with the DnaJ-bound protein, DnaK hydrolyzes its bound ATP, resulting in the formation of a stable complex. GrpE releases ADP from DnaK; ATP binding to DnaK triggers the release of the substrate protein, thus completing the reaction cycle. Several rounds of ATP-dependent interactions between DnaJ, DnaK and GrpE are required for fully efficient folding. Also involved, together with DnaK and GrpE, in the DNA replication of plasmids through activation of initiation proteins. This Idiomarina loihiensis (strain ATCC BAA-735 / DSM 15497 / L2-TR) protein is Chaperone protein DnaJ.